Consider the following 125-residue polypeptide: Small ribosomal subunit protein uS13 (125 aa).

Positions Gln101–Lys125 are disordered.

This sequence belongs to the universal ribosomal protein uS13 family. In terms of assembly, part of the 30S ribosomal subunit. Forms a loose heterodimer with protein S19. Forms two bridges to the 50S subunit in the 70S ribosome.

Located at the top of the head of the 30S subunit, it contacts several helices of the 16S rRNA. In the 70S ribosome it contacts the 23S rRNA (bridge B1a) and protein L5 of the 50S subunit (bridge B1b), connecting the 2 subunits; these bridges are implicated in subunit movement. Contacts the tRNAs in the A and P-sites. This is Small ribosomal subunit protein uS13 from Borrelia duttonii (strain Ly).